A 550-amino-acid polypeptide reads, in one-letter code: Retron Ec78 probable ATPase (550 aa).

Residues 93–100 carry the ATP-binding motif; it reads GNNGKGKT.

Functionally, probable ATPase component of antiviral defense system retron Ec78, composed of a non-coding RNA (ncRNA), a reverse transcriptase (RT), this protein and a putative HNH endonuclease. Expression of retron Ec78 confers protection against bacteriophage T5. At multiplicity of infection (MOI) of 0.02 cultures slow growth when infected with T5 but do not collapse, at MOI 2 cultures enter growth stasis. The sequence is that of Retron Ec78 probable ATPase from Escherichia coli.